We begin with the raw amino-acid sequence, 339 residues long: MSLQVQSAISLKPFNTFGVDVQARLFAEAHSDDDVREALAYSARHDVPLLVIGGGSNLLLSADVQSLVVRMASRGIRIVHEDCLESIVEAEAGEPWHPFVQSCLELGLAGLENLSLIPGTVGAAPMQNIGAYGVEIKDVFHSLTALDRETGELREFSLQDCAFGYRDSVFKHQVARWLILRVRFKLSRVARLHLEYGPVRQRLDEQGIDRPTPFDVSRAICAIRSEKLPDPAVLGNAGSFFKNPIIAAELYATIKQQHPGVVGYPQDDGQVKLAAGWLIEQAGWKGYRDGDAGVHKLQSLVLVNYGQASGLQLLSLARRIQTDIAERFGVELEMEPNLY.

Positions 19 to 189 constitute an FAD-binding PCMH-type domain; the sequence is VDVQARLFAE…LRVRFKLSRV (171 aa). R166 is a catalytic residue. The active-site Proton donor is the S239. Residue E335 is part of the active site.

Belongs to the MurB family. Requires FAD as cofactor.

Its subcellular location is the cytoplasm. The enzyme catalyses UDP-N-acetyl-alpha-D-muramate + NADP(+) = UDP-N-acetyl-3-O-(1-carboxyvinyl)-alpha-D-glucosamine + NADPH + H(+). Its pathway is cell wall biogenesis; peptidoglycan biosynthesis. Its function is as follows. Cell wall formation. The sequence is that of UDP-N-acetylenolpyruvoylglucosamine reductase from Pseudomonas syringae pv. syringae (strain B728a).